The following is a 111-amino-acid chain: Phosphoribosyl-ATP pyrophosphatase (111 aa).

It belongs to the PRA-PH family.

The protein localises to the cytoplasm. The enzyme catalyses 1-(5-phospho-beta-D-ribosyl)-ATP + H2O = 1-(5-phospho-beta-D-ribosyl)-5'-AMP + diphosphate + H(+). It participates in amino-acid biosynthesis; L-histidine biosynthesis; L-histidine from 5-phospho-alpha-D-ribose 1-diphosphate: step 2/9. The polypeptide is Phosphoribosyl-ATP pyrophosphatase (Azotobacter vinelandii (strain DJ / ATCC BAA-1303)).